The chain runs to 600 residues: Single-strand DNA endonuclease 1 (600 aa).

The tract at residues 1-97 (MGVKYLWDVL…KRRLKARFEI (97 aa)) is N-domain. The tract at residues 2–97 (GVKYLWDVLE…KRRLKARFEI (96 aa)) is XPG-N domain. Mg(2+) contacts are provided by D30, D76, E142, E144, D163, D165, and D215. The interval 130-215 (STLGILCLDG…IALALLLGSD (86 aa)) is XPG-I domain. I-domain stretches follow at residues 130-218 (STLG…DYSQ) and 130-219 (STLG…YSQG). Residues 215–353 (DYSQGVRGLR…ILPKVAERNL (139 aa)) form a 5'-3' exonuclease domain region. The interval 433–458 (MAAKKKKPKPKQKQKETSSPTKSSSL) is disordered. A compositionally biased stretch (basic residues) spans 435–444 (AKKKKPKPKQ).

It belongs to the XPG/RAD2 endonuclease family. GEN subfamily. The cofactor is Mg(2+).

The protein localises to the nucleus. Its function is as follows. Endonuclease which cleaves flap structures at the junction between single-stranded DNA and double-stranded DNA with a specific cleavage site in the 5' overhang strand exactly one nucleotide 3' of the branch point. Structure- and sequence-specific nuclease that resolves holliday junctions (HJs) by symmetrically oriented incisions in two opposing strands near the junction point, thus leading to ligatable products; HJs are physical links between homologous DNA molecules that arise as central intermediary structures during homologous recombination and repair in meiotic and somatic cells. Structure-specific nuclease with 5'-flap endonuclease activity, preferentially cleaving static flaps 5' overhang strand exactly one nucleotide in the 3' direction of the branch point and, to lower extent, on the two neighboring positions. Also able to cleave double-stranded flap strand 1 one nucleotide in the 3' direction of the branch point. Together with MUS81, essential for the resolution of toxic replication structures to ensure genome stability, and to maintain telomere integrity and replication. This Arabidopsis thaliana (Mouse-ear cress) protein is Single-strand DNA endonuclease 1.